A 226-amino-acid polypeptide reads, in one-letter code: Ethylene-responsive transcription factor-like protein At4g13040 (226 aa).

2 disordered regions span residues 63–109 (EERS…RKRV) and 195–226 (KKPKSRIEHEDTKINASMPHQPEEEEQDSDKM). Over residues 97-109 (PPKRRKQHRRKRV) the composition is skewed to basic residues. Residues 105-171 (RRKRVHNQEP…REPNFELSEE (67 aa)) constitute a DNA-binding region (AP2/ERF). Over residues 217-226 (EEEEQDSDKM) the composition is skewed to acidic residues.

It belongs to the AP2/ERF transcription factor family.

The protein localises to the nucleus. In terms of biological role, probably acts as a transcriptional activator. Binds to the GCC-box pathogenesis-related promoter element. May be involved in the regulation of gene expression by stress factors and by components of stress signal transduction pathways. This chain is Ethylene-responsive transcription factor-like protein At4g13040, found in Arabidopsis thaliana (Mouse-ear cress).